Consider the following 174-residue polypeptide: 3-hydroxydecanoyl-[acyl-carrier-protein] dehydratase (174 aa).

The active site involves histidine 73.

This sequence belongs to the thioester dehydratase family. FabA subfamily. Homodimer.

The protein localises to the cytoplasm. The catalysed reaction is a (3R)-hydroxyacyl-[ACP] = a (2E)-enoyl-[ACP] + H2O. The enzyme catalyses (3R)-hydroxydecanoyl-[ACP] = (2E)-decenoyl-[ACP] + H2O. It catalyses the reaction (2E)-decenoyl-[ACP] = (3Z)-decenoyl-[ACP]. It participates in lipid metabolism; fatty acid biosynthesis. Its function is as follows. Necessary for the introduction of cis unsaturation into fatty acids. Catalyzes the dehydration of (3R)-3-hydroxydecanoyl-ACP to E-(2)-decenoyl-ACP and then its isomerization to Z-(3)-decenoyl-ACP. Can catalyze the dehydratase reaction for beta-hydroxyacyl-ACPs with saturated chain lengths up to 16:0, being most active on intermediate chain length. The polypeptide is 3-hydroxydecanoyl-[acyl-carrier-protein] dehydratase (Saccharophagus degradans (strain 2-40 / ATCC 43961 / DSM 17024)).